We begin with the raw amino-acid sequence, 327 residues long: MQQLTEIVEQALEVIEKASDLKTLDDIRVDYLGKKGKITDMMKMMGSLSAEEKPAFGAAVNQAKQAVQQQLTERIDGLKASELEAKLIAENIDVTLPGRTLDIGGLHPVTRTIERIETFFGELGFVVKQGPEIEDDFHNFDALNISEHHPARADHDTFYFNPKVMLRTQTSGVQIRTMEHEKPPLRIISPGRVYRNDYDQTHTPMFHQVEGLMVAENVNFAELKGILHDFLRNFFEEDLEVRFRPSYFPFTEPSAEVDVMGKNGKWLEVLGCGMVHPNVLRSVGIDPEKYSGFAFGMGVERLTMLRYGVNDLRAFFENDLRFLKQFK.

Glu252 is a Mg(2+) binding site.

Belongs to the class-II aminoacyl-tRNA synthetase family. Phe-tRNA synthetase alpha subunit type 1 subfamily. Tetramer of two alpha and two beta subunits. Mg(2+) serves as cofactor.

Its subcellular location is the cytoplasm. It catalyses the reaction tRNA(Phe) + L-phenylalanine + ATP = L-phenylalanyl-tRNA(Phe) + AMP + diphosphate + H(+). The sequence is that of Phenylalanine--tRNA ligase alpha subunit from Shewanella frigidimarina (strain NCIMB 400).